Reading from the N-terminus, the 136-residue chain is Aspartate 1-decarboxylase (136 aa).

The active-site Schiff-base intermediate with substrate; via pyruvic acid is Ser25. Position 25 is a pyruvic acid (Ser) (Ser25). Position 57 (Thr57) interacts with substrate. Catalysis depends on Tyr58, which acts as the Proton donor. Position 73 to 75 (73 to 75 (GAA)) interacts with substrate.

It belongs to the PanD family. Heterooctamer of four alpha and four beta subunits. Pyruvate serves as cofactor. In terms of processing, is synthesized initially as an inactive proenzyme, which is activated by self-cleavage at a specific serine bond to produce a beta-subunit with a hydroxyl group at its C-terminus and an alpha-subunit with a pyruvoyl group at its N-terminus.

The protein localises to the cytoplasm. The catalysed reaction is L-aspartate + H(+) = beta-alanine + CO2. It functions in the pathway cofactor biosynthesis; (R)-pantothenate biosynthesis; beta-alanine from L-aspartate: step 1/1. Its function is as follows. Catalyzes the pyruvoyl-dependent decarboxylation of aspartate to produce beta-alanine. This Corynebacterium efficiens (strain DSM 44549 / YS-314 / AJ 12310 / JCM 11189 / NBRC 100395) protein is Aspartate 1-decarboxylase.